A 330-amino-acid polypeptide reads, in one-letter code: Thiosulfate transporter TsuA (330 aa).

Over 1 to 2 the chain is Periplasmic; the sequence is MI. Residues 3-18 traverse the membrane as a helical segment; the sequence is WTGLLVGFLFGIVLQR. The Cytoplasmic segment spans residues 19–36; sequence GRICFNSAFRDVLLFKDN. A helical transmembrane segment spans residues 37–59; it reads YLFKLAVFTLALEMILFVLLSQV. Over 60–70 the chain is Periplasmic; the sequence is GLMQMNPKPLN. Residues 71 to 87 form a helical membrane-spanning segment; it reads LVGNIIGGFVFGLGMVL. At 88 to 102 the chain is on the cytoplasmic side; sequence AGGCASGVTYRVGEG. The helical transmembrane segment at 103–121 threads the bilayer; it reads LTTAWFAALFYGLGAYATK. Over 122–162 the chain is Periplasmic; the sequence is SGAFSWWLSWVGQFKSPLSVEESAYYVKGAGPTISSVLGLN. Residues 163 to 180 form a helical membrane-spanning segment; that stretch reads PWIPALVIAALFILWAFG. Residues 181 to 189 are Cytoplasmic-facing; sequence TKTTSRETK. The chain crosses the membrane as a helical span at residues 190 to 211; that stretch reads FNWKIASVCLALVAGLGFITST. Residues 212-239 are Periplasmic-facing; the sequence is LSGRKYGLGITGGWINLFQGFLTNSPLN. Residues 240-258 form a helical membrane-spanning segment; sequence WEGLEIVGIILGAGVAAAV. The Cytoplasmic portion of the chain corresponds to 259-269; it reads AGEFKLRMPKN. The chain crosses the membrane as a helical span at residues 270–289; it reads PVTYLQVGIGGLLMGIGAVT. The Periplasmic segment spans residues 290-306; that stretch reads AGGCNIGHFLTGVPQLA. A helical membrane pass occupies residues 307–326; it reads LSSWLASIFFILGNWTMAWI. Residues 327 to 330 lie on the Cytoplasmic side of the membrane; it reads LFRR.

It belongs to the TsuA/YedE (TC 9.B.102) family.

Its subcellular location is the cell inner membrane. The enzyme catalyses thiosulfate(in) = thiosulfate(out). Functionally, mediates thiosulfate uptake. The polypeptide is Thiosulfate transporter TsuA (Spirochaeta thermophila (strain ATCC 700085 / DSM 6578 / Z-1203)).